The following is a 210-amino-acid chain: dTTP/UTP pyrophosphatase (210 aa).

Aspartate 85 serves as the catalytic Proton acceptor.

This sequence belongs to the Maf family. YhdE subfamily. It depends on a divalent metal cation as a cofactor.

The protein localises to the cytoplasm. The enzyme catalyses dTTP + H2O = dTMP + diphosphate + H(+). The catalysed reaction is UTP + H2O = UMP + diphosphate + H(+). Its function is as follows. Nucleoside triphosphate pyrophosphatase that hydrolyzes dTTP and UTP. May have a dual role in cell division arrest and in preventing the incorporation of modified nucleotides into cellular nucleic acids. In Saccharophagus degradans (strain 2-40 / ATCC 43961 / DSM 17024), this protein is dTTP/UTP pyrophosphatase.